The following is a 148-amino-acid chain: Probable glycine cleavage system H protein 2 (148 aa).

One can recognise a Lipoyl-binding domain in the interval 32 to 114 (TIVVGITDLA…YGKGWLVKMK (83 aa)). Residue Lys-73 is modified to N6-lipoyllysine.

The protein belongs to the GcvH family. The glycine cleavage system is composed of four proteins: P, T, L and H. The cofactor is (R)-lipoate.

Functionally, the glycine cleavage system catalyzes the degradation of glycine. The H protein shuttles the methylamine group of glycine from the P protein to the T protein. This Saccharolobus solfataricus (strain ATCC 35092 / DSM 1617 / JCM 11322 / P2) (Sulfolobus solfataricus) protein is Probable glycine cleavage system H protein 2.